Consider the following 982-residue polypeptide: E3 ubiquitin-protein ligase CBL-B (982 aa).

The segment at 35 to 167 (PPKQAAADRR…KAIFPNGQFQ (133 aa)) is 4H. The Cbl-PTB domain occupies 35–343 (PPKQAAADRR…GRSYNPDLTG (309 aa)). An EF-hand-like region spans residues 168 to 240 (GDNFRITKAD…FEFDIFTRLF (73 aa)). Residues aspartate 221, threonine 223, asparagine 225, tyrosine 227, and glutamate 232 each contribute to the Ca(2+) site. Residues 241 to 343 (QPWGSILRNW…GRSYNPDLTG (103 aa)) form an SH2-like region. Phosphoserine; by PKC/PRKCQ is present on serine 282. Arginine 286 contributes to the 4-O-phospho-L-tyrosine binding site. Residues 344–372 (LCEPTPHDHIKVTQEQYELYCEMGSTFQL) form a linker region. The residue at position 363 (tyrosine 363) is a Phosphotyrosine. The RING-type zinc finger occupies 373-412 (CKICAENDKDVKIEPCGHLMCTSCLTAWQESDGQGCPFCR). The tract at residues 466-571 (NVRKCTDRQN…PPPIPPDNRL (106 aa)) is disordered. The segment covering 473 to 486 (RQNSPVTSPGSSPL) has biased composition (polar residues). Serine 476, serine 480, serine 484, serine 521, serine 525, and serine 529 each carry phosphoserine. An interaction with VAV1 region spans residues 543 to 568 (PLPAPPPPLRDPPPPPPERPPPIPPD). A compositionally biased stretch (pro residues) spans 544–567 (LPAPPPPLRDPPPPPPERPPPIPP). Serine 634 is subject to Phosphoserine. Tyrosine 665 and tyrosine 709 each carry phosphotyrosine. Disordered stretches follow at residues 688–731 (GPLA…NVKP) and 769–929 (FDSA…EAAL). Over residues 715–725 (HPVSLNSQPSH) the composition is skewed to polar residues. Over residues 819–828 (PSLPPPPPPA) the composition is skewed to pro residues. The segment covering 838–848 (PPGSSSRPSSG) has biased composition (low complexity). Over residues 880-899 (VKTNRTSQDYDQLPSCSDGS) the composition is skewed to polar residues. Residue tyrosine 889 is modified to Phosphotyrosine. Positions 891 to 927 (QLPSCSDGSQAPARPPKPRPRRTAPEIHHRKPHGPEA) are interaction with SH3KBP1. A compositionally biased stretch (basic residues) spans 906-922 (PKPRPRRTAPEIHHRKP). Residues 931–970 (NVDAKIAKLMGEGYAFEEVKRALEIAQNNVEVARSILREF) enclose the UBA domain.

Interacts with SH3 domain-containing proteins LCK, CRK and SORBS1. Interacts with LCP2 and ZAP70. Interacts with CBL. Interacts with SH3 domain-containing proteins VAV1, FYN, FGR, PLCG1, GRB2, CRKL, PIK3R1 and SH3KBP1/CIN85. Identified in heterotrimeric complexes with SH3KBP1/CIN85, CD2AP and ARHGEF7, where one CBLB peptide binds two copies of the other protein. Interacts with poly-ubiquitinated proteins. Dimerization is required for the binding of poly-ubiquitin, but not for the binding of mono-ubiquitin. Interacts with EGFR (phosphorylated). Interacts with IFT20. Post-translationally, phosphorylated on tyrosine and serine residues upon TCR or BCR activation, and upon various types of cell stimulation. Auto-ubiquitinated upon EGF-mediated cell activation or upon T-cell costimulation by CD28; which promotes proteasomal degradation. Expressed in placenta, heart, lung, kidney, spleen, ovary and testis, as well as fetal brain and liver and hematopoietic cell lines, but not in adult brain, liver, pancreas, salivary gland, or skeletal muscle. Present in lymphocytes (at protein level).

The protein resides in the cytoplasm. It carries out the reaction S-ubiquitinyl-[E2 ubiquitin-conjugating enzyme]-L-cysteine + [acceptor protein]-L-lysine = [E2 ubiquitin-conjugating enzyme]-L-cysteine + N(6)-ubiquitinyl-[acceptor protein]-L-lysine.. The protein operates within protein modification; protein ubiquitination. E3 ubiquitin-protein ligase which accepts ubiquitin from specific E2 ubiquitin-conjugating enzymes, and transfers it to substrates, generally promoting their degradation by the proteasome. Negatively regulates TCR (T-cell receptor), BCR (B-cell receptor) and FCER1 (high affinity immunoglobulin epsilon receptor) signal transduction pathways. In naive T-cells, inhibits VAV1 activation upon TCR engagement and imposes a requirement for CD28 costimulation for proliferation and IL-2 production. Also acts by promoting PIK3R1/p85 ubiquitination, which impairs its recruitment to the TCR and subsequent activation. In activated T-cells, inhibits PLCG1 activation and calcium mobilization upon restimulation and promotes anergy. In B-cells, acts by ubiquitinating SYK and promoting its proteasomal degradation. Slightly promotes SRC ubiquitination. May be involved in EGFR ubiquitination and internalization. May be functionally coupled with the E2 ubiquitin-protein ligase UB2D3. In association with CBL, required for proper feedback inhibition of ciliary platelet-derived growth factor receptor-alpha (PDGFRA) signaling pathway via ubiquitination and internalization of PDGFRA. This Homo sapiens (Human) protein is E3 ubiquitin-protein ligase CBL-B (CBLB).